The chain runs to 207 residues: Galactoside O-acetyltransferase (207 aa).

Asparagine 87 is a binding site for acetyl-CoA. Histidine 117 (proton donor/acceptor) is an active-site residue. Residues alanine 144, alanine 162, 167 to 168 (TK), and arginine 185 each bind acetyl-CoA.

This sequence belongs to the transferase hexapeptide repeat family. As to quaternary structure, homotrimer.

It is found in the cytoplasm. It carries out the reaction a beta-D-galactoside + acetyl-CoA = a 6-acetyl-beta-D-galactoside + CoA. This Lactococcus lactis subsp. lactis (strain IL1403) (Streptococcus lactis) protein is Galactoside O-acetyltransferase (lacA).